Here is a 571-residue protein sequence, read N- to C-terminus: Glutamate--tRNA ligase (571 aa).

Positions 114-124 match the 'HIGH' region motif; the sequence is PNPNGPWHVGH. The disordered stretch occupies residues 431-453; sequence KPLAGGPESASPPLHPNDEDRGR.

This sequence belongs to the class-I aminoacyl-tRNA synthetase family. Glutamate--tRNA ligase type 2 subfamily.

Its subcellular location is the cytoplasm. It carries out the reaction tRNA(Glu) + L-glutamate + ATP = L-glutamyl-tRNA(Glu) + AMP + diphosphate. In terms of biological role, catalyzes the attachment of glutamate to tRNA(Glu) in a two-step reaction: glutamate is first activated by ATP to form Glu-AMP and then transferred to the acceptor end of tRNA(Glu). The sequence is that of Glutamate--tRNA ligase from Natronomonas pharaonis (strain ATCC 35678 / DSM 2160 / CIP 103997 / JCM 8858 / NBRC 14720 / NCIMB 2260 / Gabara) (Halobacterium pharaonis).